Reading from the N-terminus, the 348-residue chain is Protein RecA (348 aa).

67-74 (GPESSGKT) is an ATP binding site.

It belongs to the RecA family.

It localises to the cytoplasm. Can catalyze the hydrolysis of ATP in the presence of single-stranded DNA, the ATP-dependent uptake of single-stranded DNA by duplex DNA, and the ATP-dependent hybridization of homologous single-stranded DNAs. It interacts with LexA causing its activation and leading to its autocatalytic cleavage. This chain is Protein RecA, found in Salinispora arenicola (strain CNS-205).